Reading from the N-terminus, the 231-residue chain is Casparian strip membrane protein 1 (231 aa).

The Cytoplasmic segment spans residues 1–69; it reads MSTSETATVI…FRQSDRGSRC (69 aa). The helical transmembrane segment at 70-90 threads the bilayer; sequence LAFLDFLLRIAAFGPALAAAI. Residues 91 to 117 lie on the Extracellular side of the membrane; it reads ATGTSDETLSVFTEFFQFRARFDDFPA. The helical transmembrane segment at 118 to 138 threads the bilayer; the sequence is FLFLMVANAIAAGYLVLSLPF. Residues 139-152 lie on the Cytoplasmic side of the membrane; that stretch reads SAVVVLRPQATGLR. The helical transmembrane segment at 153 to 173 threads the bilayer; that stretch reads LLLLVCDTIMIGLLTAAAAAA. Over 174–207 the chain is Extracellular; the sequence is AAIVELAHNGNERANWVAICMQFHGFCQRTSGAV. The chain crosses the membrane as a helical span at residues 208-228; that stretch reads VASFLSVFLFLLLVVLAAFAI. Topologically, residues 229 to 231 are cytoplasmic; that stretch reads RKR.

Belongs to the Casparian strip membrane proteins (CASP) family. Homodimer and heterodimers.

The protein resides in the cell membrane. Its function is as follows. Regulates membrane-cell wall junctions and localized cell wall deposition. Required for establishment of the Casparian strip membrane domain (CSD) and the subsequent formation of Casparian strips, a cell wall modification of the root endodermis that determines an apoplastic barrier between the intraorganismal apoplasm and the extraorganismal apoplasm and prevents lateral diffusion. The polypeptide is Casparian strip membrane protein 1 (Brachypodium distachyon (Purple false brome)).